The following is a 343-amino-acid chain: L-threonine 3-dehydrogenase (343 aa).

Position 40 (C40) interacts with Zn(2+). Active-site charge relay system residues include T42 and H45. Residues H65, E66, C95, C98, C101, and C109 each contribute to the Zn(2+) site. NAD(+)-binding positions include I177, D197, R202, L264–I266, and I288–Y289.

It belongs to the zinc-containing alcohol dehydrogenase family. As to quaternary structure, homotetramer. Requires Zn(2+) as cofactor.

It localises to the cytoplasm. The catalysed reaction is L-threonine + NAD(+) = (2S)-2-amino-3-oxobutanoate + NADH + H(+). It functions in the pathway amino-acid degradation; L-threonine degradation via oxydo-reductase pathway; glycine from L-threonine: step 1/2. Its function is as follows. Catalyzes the NAD(+)-dependent oxidation of L-threonine to 2-amino-3-ketobutyrate. In Aliivibrio salmonicida (strain LFI1238) (Vibrio salmonicida (strain LFI1238)), this protein is L-threonine 3-dehydrogenase.